Consider the following 351-residue polypeptide: MSQARPATLRVAVLGAGSWGTALAAAASRRHPTVLWARDGAQAQAMAARHENTRYLPGVALPPALQVSADLAQALAHLAHDPAHALIILGVPVAGMTPLCTELAARLPALGLQAVPLVWTCKGFEEQTAHLPHETVQAALGAMPGLAAGVLSGPSFAREVAQGLPVALTVASESSAVRDAVTTALHGAAVRIYASTDVVGVEVGGALKNVIAVACGICDGLALGTNARAALITRGLAEMARFGAALGAQQETFAGLTGLGDLVLTATGELSRNRRVGLEIGAGRKLADILASGMTAEGVRCARAARDRARALNIELPITEAVCAVLFEGLSPMTAVSALLAREARPESPTP.

NADPH contacts are provided by serine 18, tryptophan 19, arginine 38, and lysine 122. Lysine 122, glycine 153, and serine 155 together coordinate sn-glycerol 3-phosphate. Alanine 157 is an NADPH binding site. Residues lysine 208, aspartate 261, serine 271, arginine 272, and asparagine 273 each coordinate sn-glycerol 3-phosphate. The active-site Proton acceptor is the lysine 208. Arginine 272 contributes to the NADPH binding site. Residue glutamate 297 participates in NADPH binding.

Belongs to the NAD-dependent glycerol-3-phosphate dehydrogenase family.

It is found in the cytoplasm. It catalyses the reaction sn-glycerol 3-phosphate + NAD(+) = dihydroxyacetone phosphate + NADH + H(+). The enzyme catalyses sn-glycerol 3-phosphate + NADP(+) = dihydroxyacetone phosphate + NADPH + H(+). It participates in membrane lipid metabolism; glycerophospholipid metabolism. Catalyzes the reduction of the glycolytic intermediate dihydroxyacetone phosphate (DHAP) to sn-glycerol 3-phosphate (G3P), the key precursor for phospholipid synthesis. The polypeptide is Glycerol-3-phosphate dehydrogenase [NAD(P)+] (Bordetella parapertussis (strain 12822 / ATCC BAA-587 / NCTC 13253)).